A 299-amino-acid chain; its full sequence is Probable endonuclease 4 (299 aa).

Positions 69, 110, 145, 179, 182, 214, 227, 229, and 259 each coordinate Zn(2+).

This sequence belongs to the AP endonuclease 2 family. Requires Zn(2+) as cofactor.

It catalyses the reaction Endonucleolytic cleavage to 5'-phosphooligonucleotide end-products.. Endonuclease IV plays a role in DNA repair. It cleaves phosphodiester bonds at apurinic or apyrimidinic (AP) sites, generating a 3'-hydroxyl group and a 5'-terminal sugar phosphate. The protein is Probable endonuclease 4 of Geobacillus kaustophilus (strain HTA426).